The primary structure comprises 245 residues: tRNA (guanine-N(1)-)-methyltransferase (245 aa).

Residues G111 and 131-136 (IGDYVL) each bind S-adenosyl-L-methionine.

This sequence belongs to the RNA methyltransferase TrmD family. In terms of assembly, homodimer.

It localises to the cytoplasm. The enzyme catalyses guanosine(37) in tRNA + S-adenosyl-L-methionine = N(1)-methylguanosine(37) in tRNA + S-adenosyl-L-homocysteine + H(+). Its function is as follows. Specifically methylates guanosine-37 in various tRNAs. The protein is tRNA (guanine-N(1)-)-methyltransferase of Caldicellulosiruptor saccharolyticus (strain ATCC 43494 / DSM 8903 / Tp8T 6331).